The chain runs to 258 residues: Phosphoadenosine 5'-phosphosulfate reductase (258 aa).

The active-site Nucleophile; cysteine thiosulfonate intermediate is the Cys244.

The protein belongs to the PAPS reductase family. CysH subfamily.

Its subcellular location is the cytoplasm. The enzyme catalyses [thioredoxin]-disulfide + sulfite + adenosine 3',5'-bisphosphate + 2 H(+) = [thioredoxin]-dithiol + 3'-phosphoadenylyl sulfate. The protein operates within sulfur metabolism; hydrogen sulfide biosynthesis; sulfite from sulfate: step 3/3. Catalyzes the formation of sulfite from phosphoadenosine 5'-phosphosulfate (PAPS) using thioredoxin as an electron donor. This chain is Phosphoadenosine 5'-phosphosulfate reductase, found in Vibrio atlanticus (strain LGP32) (Vibrio splendidus (strain Mel32)).